A 108-amino-acid chain; its full sequence is UPF0060 membrane protein BLi00854/BL03049 (108 aa).

The next 4 membrane-spanning stretches (helical) occupy residues Ile-3 to Trp-23, Pro-31 to Phe-51, Val-60 to Asp-80, and Leu-86 to Pro-106.

It belongs to the UPF0060 family.

The protein localises to the cell membrane. This Bacillus licheniformis (strain ATCC 14580 / DSM 13 / JCM 2505 / CCUG 7422 / NBRC 12200 / NCIMB 9375 / NCTC 10341 / NRRL NRS-1264 / Gibson 46) protein is UPF0060 membrane protein BLi00854/BL03049.